Consider the following 611-residue polypeptide: uncharacterized protein (611 aa).

Residues 51–351 form the SAC domain; it reads LYGFIRLKIY…DYHKQGSRNL (301 aa).

This sequence to yeast RSD1 and S.pombe SpBC19F5.03.

This is an uncharacterized protein from Schizosaccharomyces pombe (strain 972 / ATCC 24843) (Fission yeast).